The sequence spans 177 residues: ATP synthase subunit delta (177 aa).

Belongs to the ATPase delta chain family. F-type ATPases have 2 components, F(1) - the catalytic core - and F(0) - the membrane proton channel. F(1) has five subunits: alpha(3), beta(3), gamma(1), delta(1), epsilon(1). F(0) has three main subunits: a(1), b(2) and c(10-14). The alpha and beta chains form an alternating ring which encloses part of the gamma chain. F(1) is attached to F(0) by a central stalk formed by the gamma and epsilon chains, while a peripheral stalk is formed by the delta and b chains.

The protein resides in the cell inner membrane. Functionally, f(1)F(0) ATP synthase produces ATP from ADP in the presence of a proton or sodium gradient. F-type ATPases consist of two structural domains, F(1) containing the extramembraneous catalytic core and F(0) containing the membrane proton channel, linked together by a central stalk and a peripheral stalk. During catalysis, ATP synthesis in the catalytic domain of F(1) is coupled via a rotary mechanism of the central stalk subunits to proton translocation. In terms of biological role, this protein is part of the stalk that links CF(0) to CF(1). It either transmits conformational changes from CF(0) to CF(1) or is implicated in proton conduction. The protein is ATP synthase subunit delta of Cronobacter sakazakii (strain ATCC BAA-894) (Enterobacter sakazakii).